A 318-amino-acid chain; its full sequence is Glutathione synthetase (318 aa).

Residues 128 to 313 enclose the ATP-grasp domain; sequence KLAILNFSRF…VAAMFADAVA (186 aa). Position 154–210 (154–210) interacts with ATP; that stretch reads LKEHGDIIIKPLDGMGGMGIFRLTEKDPNIGSILETLMQLDSRTIMAQRYIPEIVHG. E284 and N286 together coordinate Mg(2+).

Belongs to the prokaryotic GSH synthase family. It depends on Mg(2+) as a cofactor. Requires Mn(2+) as cofactor.

The catalysed reaction is gamma-L-glutamyl-L-cysteine + glycine + ATP = glutathione + ADP + phosphate + H(+). It participates in sulfur metabolism; glutathione biosynthesis; glutathione from L-cysteine and L-glutamate: step 2/2. This chain is Glutathione synthetase, found in Neisseria meningitidis serogroup A / serotype 4A (strain DSM 15465 / Z2491).